Here is a 79-residue protein sequence, read N- to C-terminus: Small ribosomal subunit protein uS17 (79 aa).

It belongs to the universal ribosomal protein uS17 family. In terms of assembly, part of the 30S ribosomal subunit.

In terms of biological role, one of the primary rRNA binding proteins, it binds specifically to the 5'-end of 16S ribosomal RNA. This is Small ribosomal subunit protein uS17 from Paramagnetospirillum magneticum (strain ATCC 700264 / AMB-1) (Magnetospirillum magneticum).